The chain runs to 734 residues: Monosaccharide-sensing protein 1 (734 aa).

The next 6 membrane-spanning stretches (helical) occupy residues 6-26, 44-64, 79-99, 102-122, 133-153, and 163-183; these read LVAL…ATIA, GLVV…SGPI, VMYF…VLCF, LLNG…ISET, TLPQ…VFTM, and AMLG…VFYL. The segment at 351-403 is disordered; the sequence is YNKDNDDYATDDGAGDDDDSDNDLRSPLMSRQTTSMDKDMIPHPTSGSTLSMR. Acidic residues predominate over residues 357–371; sequence DYATDDGAGDDDDSD. Phosphoserine occurs at positions 446 and 480. 6 helical membrane-spanning segments follow: residues 510–530, 556–576, 588–608, 621–641, 653–673, and 680–700; these read ALVV…NGVL, ASFL…VVAM, LLWT…SELI, GCVV…PNIL, LCIA…TYSL, and IGLV…WIFV.

It belongs to the major facilitator superfamily. Sugar transporter (TC 2.A.1.1) family. In terms of assembly, binds to VIK at the tonoplast. In terms of processing, phosphorylated by VIK; this activation promotes carrier activity. In terms of tissue distribution, mostly expressed in juvenile and adult leaves, to a lower extent, in flower tissues, and, at low levels, in roots and stems.

It is found in the vacuole membrane. The catalysed reaction is D-glucose(out) + H(+)(in) = D-glucose(in) + H(+)(out). The enzyme catalyses sucrose(out) + H(+)(in) = sucrose(in) + H(+)(out). Its activity is regulated as follows. Enhanced activation by VIK-mediated phosphorylation promoting carrier activity and consequently vacuolar sugar accumulation. Sugar proton-coupled antiporter which contributes to vacuolar sugar import (e.g. monosaccharides including glucose, sucrose and fructose), particularly during stress responses (e.g. in response to cold). Required for cytosolic glucose homeostasis. This Arabidopsis thaliana (Mouse-ear cress) protein is Monosaccharide-sensing protein 1.